Consider the following 603-residue polypeptide: Probable HECT-type ubiquitin ligase-interacting protein creD (603 aa).

2 disordered regions span residues 375–398 (ELDP…GTLS) and 432–499 (LNIT…MATP). The span at 443 to 455 (TDHESQNDSEHRR) shows a compositional bias: basic and acidic residues. A compositionally biased stretch (low complexity) spans 465 to 481 (PSSGSNSHSPSSPVLSR). Basic and acidic residues predominate over residues 482 to 492 (RPSDEVDHEHV).

It belongs to the arrestin family. Interacts with hulA.

Functionally, component of the regulatory network controlling carbon source utilization through ubiquitination and deubiquitination involving creA, creB, creC, creD and acrB. May be involved in signaling by recognizing appropriately phosphorylated substrates via its arrestin domains and then recruit a HECT-type ubiquitin ligase such as hulA, leading to ubiquitination of the substrate, providing a link between ubiquitination and phosphorylation in protein regulation and stability. This is Probable HECT-type ubiquitin ligase-interacting protein creD (creD) from Aspergillus flavus (strain ATCC 200026 / FGSC A1120 / IAM 13836 / NRRL 3357 / JCM 12722 / SRRC 167).